The primary structure comprises 195 residues: Imidazole glycerol phosphate synthase subunit HisH 2 (195 aa).

Positions 2 to 195 constitute a Glutamine amidotransferase type-1 domain; sequence KIIIIDTACA…LISNFIKDIG (194 aa). Cys-77 functions as the Nucleophile in the catalytic mechanism. Catalysis depends on residues His-175 and Glu-177.

As to quaternary structure, heterodimer of HisH and HisF.

The protein localises to the cytoplasm. It carries out the reaction 5-[(5-phospho-1-deoxy-D-ribulos-1-ylimino)methylamino]-1-(5-phospho-beta-D-ribosyl)imidazole-4-carboxamide + L-glutamine = D-erythro-1-(imidazol-4-yl)glycerol 3-phosphate + 5-amino-1-(5-phospho-beta-D-ribosyl)imidazole-4-carboxamide + L-glutamate + H(+). The enzyme catalyses L-glutamine + H2O = L-glutamate + NH4(+). Its pathway is amino-acid biosynthesis; L-histidine biosynthesis; L-histidine from 5-phospho-alpha-D-ribose 1-diphosphate: step 5/9. IGPS catalyzes the conversion of PRFAR and glutamine to IGP, AICAR and glutamate. The HisH subunit provides the glutamine amidotransferase activity that produces the ammonia necessary to HisF for the synthesis of IGP and AICAR. The polypeptide is Imidazole glycerol phosphate synthase subunit HisH 2 (hisH2) (Campylobacter jejuni subsp. jejuni serotype O:2 (strain ATCC 700819 / NCTC 11168)).